A 242-amino-acid polypeptide reads, in one-letter code: Segregation and condensation protein A (242 aa).

The protein belongs to the ScpA family. As to quaternary structure, component of a cohesin-like complex composed of ScpA, ScpB and the Smc homodimer, in which ScpA and ScpB bind to the head domain of Smc. The presence of the three proteins is required for the association of the complex with DNA.

It localises to the cytoplasm. In terms of biological role, participates in chromosomal partition during cell division. May act via the formation of a condensin-like complex containing Smc and ScpB that pull DNA away from mid-cell into both cell halves. The chain is Segregation and condensation protein A from Streptococcus mitis.